The chain runs to 183 residues: Ribosome-recycling factor (183 aa).

This sequence belongs to the RRF family.

It localises to the cytoplasm. Responsible for the release of ribosomes from messenger RNA at the termination of protein biosynthesis. May increase the efficiency of translation by recycling ribosomes from one round of translation to another. This chain is Ribosome-recycling factor, found in Mycoplasma genitalium (strain ATCC 33530 / DSM 19775 / NCTC 10195 / G37) (Mycoplasmoides genitalium).